The primary structure comprises 340 residues: MVGEMEAKEKPKPSPDYLMQLMNDKKLMSSLPNFCGIFNHLERLLDEEISRVRKDMYNDTLNGSTEKRSAELPDAVGPIVQLQEKLYVPVKEYPDFNFVGRILGPRGLTAKQLEAETGCKIMVRGKGSMRDKKKEEQNRGKPNWEHLNEDLHVLITVEDAQNRAEIKLKRAVEEVKKLLIPAAEGEDSLKKMQLMELAILNGTYRDANIKSPALAFSLAATAQAPRIITGPAPVLPPAALRTPTPAGPTIMPLIRQIQTAVMPNGTPHPTAAIVPPGPEAGLIYTPYEYPYTLAPATSILEYPIEPSGVLGAVATKVRRHDMRVHPYQRIVTADRAATGN.

One can recognise a KH domain in the interval 87–153; it reads YVPVKEYPDF…WEHLNEDLHV (67 aa). An SH3-binding motif is present at residues 275-278; it reads PPGP. Positions 323–329 match the Nuclear localization signal motif; sequence RVHPYQR.

Belongs to the quaking family. In terms of assembly, homodimer; does not require RNA to homodimerize.

Its subcellular location is the cytoplasm. The protein resides in the nucleus. Functionally, RNA reader protein, which recognizes and binds specific RNAs, thereby regulating RNA metabolic processes, such as pre-mRNA splicing, circular RNA (circRNA) formation, mRNA export, mRNA stability and/or translation. Involved in various cellular processes, such as mRNA storage into stress granules, apoptosis, interferon response, glial cell fate and development. Binds to the 5'-NACUAAY-N(1,20)-UAAY-3' RNA core sequence. Acts as a mRNA modification reader that specifically recognizes and binds mRNA transcripts modified by internal N(7)-methylguanine (m7G). Promotes the formation of circular RNAs (circRNAs): acts by binding to sites flanking circRNA-forming exons. CircRNAs are produced by back-splicing circularization of pre-mRNAs. Required to protect and promote stability of mRNAs which promotes oligodendrocyte differentiation. Acts as an important regulator of muscle development. This Gallus gallus (Chicken) protein is KH domain-containing RNA-binding protein QKI.